The primary structure comprises 380 residues: 3-dehydroquinate synthase (380 aa).

Belongs to the archaeal-type DHQ synthase family.

It carries out the reaction 2-amino-2,3,7-trideoxy-D-lyxo-hept-6-ulosonate + NAD(+) + H2O = 3-dehydroquinate + NH4(+) + NADH + H(+). Catalyzes the oxidative deamination and cyclization of 2-amino-3,7-dideoxy-D-threo-hept-6-ulosonic acid (ADH) to yield 3-dehydroquinate (DHQ), which is fed into the canonical shikimic pathway of aromatic amino acid biosynthesis. This chain is 3-dehydroquinate synthase, found in Methanosarcina acetivorans (strain ATCC 35395 / DSM 2834 / JCM 12185 / C2A).